Here is a 479-residue protein sequence, read N- to C-terminus: UDP-N-acetylmuramoylalanine--D-glutamate ligase (479 aa).

110 to 116 (GTNGKTS) provides a ligand contact to ATP.

Belongs to the MurCDEF family.

Its subcellular location is the cytoplasm. It carries out the reaction UDP-N-acetyl-alpha-D-muramoyl-L-alanine + D-glutamate + ATP = UDP-N-acetyl-alpha-D-muramoyl-L-alanyl-D-glutamate + ADP + phosphate + H(+). The protein operates within cell wall biogenesis; peptidoglycan biosynthesis. Cell wall formation. Catalyzes the addition of glutamate to the nucleotide precursor UDP-N-acetylmuramoyl-L-alanine (UMA). This is UDP-N-acetylmuramoylalanine--D-glutamate ligase from Bifidobacterium adolescentis (strain ATCC 15703 / DSM 20083 / NCTC 11814 / E194a).